Here is an 801-residue protein sequence, read N- to C-terminus: Cation/H(+) antiporter 7 (801 aa).

Transmembrane regions (helical) follow at residues 58-78 (PNLE…EILF), 83-103 (IPIP…LFSY), 128-148 (GAFG…VGML), 154-174 (RAAL…YILM), 192-212 (EIIL…LTDL), 223-243 (VQSC…GTVL), 254-274 (IVIV…MLWI), 287-307 (VYIY…LNFF), 312-332 (YGWF…SALI), 340-360 (VGVL…ISWL), 377-397 (AISV…ITAF), 407-427 (IVLA…LGYI), and 438-458 (FTIA…AIEF).

This sequence belongs to the monovalent cation:proton antiporter 2 (CPA2) transporter (TC 2.A.37) family. CHX (TC 2.A.37.4) subfamily. In terms of tissue distribution, expressed in pollen.

Its subcellular location is the membrane. Its function is as follows. May operate as a cation/H(+) antiporter. This Arabidopsis thaliana (Mouse-ear cress) protein is Cation/H(+) antiporter 7 (CHX7).